We begin with the raw amino-acid sequence, 496 residues long: Rhamnulokinase (496 aa).

An ATP-binding site is contributed by 13–17 (ASSGR). Residues Gly-83 and 236–238 (HDT) each bind substrate. The active-site Proton acceptor is the Asp-237. Thr-259 provides a ligand contact to ATP. Asn-296 serves as a coordination point for substrate. Residue Gln-304 coordinates ATP. Cys-353 and Cys-370 are disulfide-bonded. An ATP-binding site is contributed by Gly-402. A disulfide bridge links Cys-413 with Cys-417.

This sequence belongs to the rhamnulokinase family. Mg(2+) serves as cofactor.

It carries out the reaction L-rhamnulose + ATP = L-rhamnulose 1-phosphate + ADP + H(+). It functions in the pathway carbohydrate degradation; L-rhamnose degradation; glycerone phosphate from L-rhamnose: step 2/3. Involved in the catabolism of L-rhamnose (6-deoxy-L-mannose). Catalyzes the transfer of the gamma-phosphate group from ATP to the 1-hydroxyl group of L-rhamnulose to yield L-rhamnulose 1-phosphate. The chain is Rhamnulokinase from Pectobacterium atrosepticum (strain SCRI 1043 / ATCC BAA-672) (Erwinia carotovora subsp. atroseptica).